The primary structure comprises 574 residues: E3 ubiquitin-protein ligase TRIM23 (574 aa).

The segment at 31 to 76 (CGVCEDVFSLQGDKVPRLLLCGHTVCHDCLTRLPLHGRAIRCPFDR) adopts an RING-type; degenerate zinc-finger fold. The segment at 122–168 (ESIIRCDEDEAHLASVYCTVCATHLCSECSQVTHSTKTLAKHRRVPL) adopts a B box-type; degenerate zinc-finger fold. Residues 352–379 (RVVLAKQEITRLLETLQKQQQQFTEVAD) are a coiled coil. The tract at residues 390-574 (TFTKDNRVHI…LVAAGVLDVA (185 aa)) is ARF-like. GTP is bound by residues 411-418 (GLDGAGKT), 454-458 (DVGGK), and 513-516 (NKQD).

In the C-terminal section; belongs to the small GTPase superfamily. Arf family. As to quaternary structure, homodimer. Interacts with PSCD1. Interacts with UBE2D2. Interacts with TBK1 (via N-terminal kinase domain) and p62/SQSTM1. (Microbial infection) Interacts with human cytomegalovirus protein UL144; this interaction might cause autoubiquitination of TRAF6, leading to NF-kappa-B activation.

Its subcellular location is the cytoplasm. It localises to the endomembrane system. The protein localises to the golgi apparatus membrane. It is found in the lysosome membrane. The enzyme catalyses S-ubiquitinyl-[E2 ubiquitin-conjugating enzyme]-L-cysteine + [acceptor protein]-L-lysine = [E2 ubiquitin-conjugating enzyme]-L-cysteine + N(6)-ubiquitinyl-[acceptor protein]-L-lysine.. It participates in protein modification; protein ubiquitination. Acts as an E3 ubiquitin-protein ligase. Plays an essential role in autophagy activation during viral infection. Mechanistically, activates TANK-binding kinase 1/TBK1 by facilitating its dimerization and ability to phosphorylate the selective autophagy receptor SQSTM1. In order to achieve this function, TRIM23 mediates 'Lys-27'-linked auto-ubiquitination of its ADP-ribosylation factor (ARF) domain to induce its GTPase activity and its recruitment to autophagosomes. In terms of biological role, (Microbial infection) Mediates TRAF6 auto-ubiquitination in the presence of human cytomegalovirus protein UL144, resulting in the virally controlled activation of NF-kappa-B stimulation at early times of HCMV infection. The protein is E3 ubiquitin-protein ligase TRIM23 (TRIM23) of Homo sapiens (Human).